The chain runs to 409 residues: MSAETKKTDVKKVVLAYSGGLDTSAIIPWLKETYDNCEIVAFCADVGQGSEELEGLHEKAIASGASECYIVDLKEELVADYIYPTIATGAIYEGTYLLGTSMARPIIAKAQVEVARKVGADAVCHGCTGKGNDQVRFEGCFAALAPDLKVIAPWREWEMVSREDLLDYLAERNIETTASATKIYSRDANAWHISHEGGELEDPWNEPTQGVWTMTVAPEDAPNTPEYVALELEQGKITKVNGEALSPYKALMLLNDLAGAHGVGRIDITENRLVGMKSRGCYETPGGTVMFAALRAIEELVLDKTSREWREQVGAQMAHLVYDGRWFTPLCESLLGASKPLADLVNGEVVIKLYKGQASAVKKRSPNSLYSEEFATFGEDDVYNQKDAEGFIRLYSLSSRIRALHGHNK.

ATP-binding positions include Ala-16–Ser-24 and Ala-44. L-citrulline contacts are provided by Tyr-96 and Ser-101. Gly-126 is an ATP binding site. L-aspartate is bound by residues Thr-128, Asn-132, and Asp-133. Asn-132 contacts L-citrulline. Positions 136, 185, 194, 270, and 282 each coordinate L-citrulline.

The protein belongs to the argininosuccinate synthase family. Type 1 subfamily. In terms of assembly, homotetramer.

Its subcellular location is the cytoplasm. It carries out the reaction L-citrulline + L-aspartate + ATP = 2-(N(omega)-L-arginino)succinate + AMP + diphosphate + H(+). Its pathway is amino-acid biosynthesis; L-arginine biosynthesis; L-arginine from L-ornithine and carbamoyl phosphate: step 2/3. This Shewanella piezotolerans (strain WP3 / JCM 13877) protein is Argininosuccinate synthase.